Here is a 95-residue protein sequence, read N- to C-terminus: Protein RnfH (95 aa).

The protein belongs to the UPF0125 (RnfH) family.

The polypeptide is Protein RnfH (Erwinia tasmaniensis (strain DSM 17950 / CFBP 7177 / CIP 109463 / NCPPB 4357 / Et1/99)).